We begin with the raw amino-acid sequence, 311 residues long: Probable manganese-dependent inorganic pyrophosphatase (311 aa).

Positions 9, 13, 15, 75, 97, and 149 each coordinate Mn(2+).

The protein belongs to the PPase class C family. Mn(2+) serves as cofactor.

The protein resides in the cytoplasm. It carries out the reaction diphosphate + H2O = 2 phosphate + H(+). This chain is Probable manganese-dependent inorganic pyrophosphatase, found in Lactobacillus helveticus (strain DPC 4571).